Here is a 451-residue protein sequence, read N- to C-terminus: MRMAHVADVHLGHALMNLRSREEAVMETFERLMEEVRECSVDVLVIAGDLFEHARPKTEALYLAVEKLSELKEDGVEIVATAGNHEIRRRKGAVSPISVLERMGLVRHLYYSERRPERHRYTATFDGVRVTFHGLQYLPKNSFVERAKVIRAKYRPDPEADVNVAIFHQALPGTIPDESEIVEPAYFPEGHDYYAMGHVHVPSREEKIHGSPAPYPGSPEPLTFLEVKDERGAHKRRGFFLVEFDRGGLVEYEFVEVEWSRELSVVEVSGERWEEELRRRVRRGQIVKVVAKDTGASPEEVEKVAIEAGADRCVVELRERRREVEEGDETEGPLDLEGIIREGVKRARAATLTRVDVPDDVVVEVALEILRGVREDNPPDLGDVEGIVAGEPPSEGSEESSEEPEESDGEEVGLEVEEVKVESRGTSSEGMSRAGSKLGSSGRPSLDRWIG.

4 residues coordinate Mn(2+): aspartate 8, histidine 10, aspartate 49, and asparagine 84. Histidine 85 (proton donor) is an active-site residue. The Mn(2+) site is built by histidine 168, histidine 198, and histidine 200. Residues 374–451 (REDNPPDLGD…GRPSLDRWIG (78 aa)) form a disordered region. Acidic residues predominate over residues 396–416 (GSEESSEEPEESDGEEVGLEV).

It belongs to the MRE11/RAD32 family. As to quaternary structure, homodimer. Forms a heterotetramer composed of two Mre11 subunits and two Rad50 subunits. Mn(2+) is required as a cofactor.

Its activity is regulated as follows. Nuclease activity is regulated by Rad50. Its function is as follows. Part of the Rad50/Mre11 complex, which is involved in the early steps of DNA double-strand break (DSB) repair. The complex may facilitate opening of the processed DNA ends to aid in the recruitment of HerA and NurA. Mre11 binds to DSB ends and has both double-stranded 3'-5' exonuclease activity and single-stranded endonuclease activity. The sequence is that of DNA double-strand break repair protein Mre11 from Methanopyrus kandleri (strain AV19 / DSM 6324 / JCM 9639 / NBRC 100938).